The following is a 96-amino-acid chain: Protein RnfH (96 aa).

Belongs to the UPF0125 (RnfH) family.

This is Protein RnfH from Shigella flexneri.